A 551-amino-acid chain; its full sequence is Alkaline/neutral invertase CINV1 (551 aa).

Met-1 is modified (N-acetylmethionine). Phosphoserine occurs at positions 11, 14, 44, and 61. A disordered region spans residues 50–74 (TGYSRHDGIHDSPRGRSVLDTPLSS). Positions 53–63 (SRHDGIHDSPR) are enriched in basic and acidic residues. Thr-70 carries the phosphothreonine modification. At Ser-547 the chain carries Phosphoserine.

Belongs to the glycosyl hydrolase 100 family. As to quaternary structure, forms homohexamers. Interacts with PIP5K9. Interaction with PIP5K9 represses CINV1 activity. Interacts with GRF1, GRF2, GRF3, GRF4, GRF5, GRF6, GRF7, GRF8 and GRF10; these interactions are dependent of the phosphorylation at Ser-547. In terms of processing, phosphorylated at Ser-547 by CPK3 and CPK21. Expressed in radicle, hypocotyls, root tips and vascular cylinder, leaf vasculature, shoot stipules, trichomes, stem, stigma apex and base of siliques.

The protein localises to the cytoplasm. It is found in the cytosol. The protein resides in the nucleus. The enzyme catalyses Hydrolysis of terminal non-reducing beta-D-fructofuranoside residues in beta-D-fructofuranosides.. Its function is as follows. Cytosolic invertase that specifically cleaves sucrose into glucose and fructose and is involved in the regulation of multiple tissue development including primary root elongation, root hair growth, leaf and silique development, and floral transition. Is involved in osmotic stress-induced inhibition on lateral root growth by controlling the concentration of hexose in cells. May regulate sugar-mediated root development by controlling sucrose catabolism in root cells. Contributes to carbon partitioning and cellulose biosynthesis in seedlings. The sequence is that of Alkaline/neutral invertase CINV1 from Arabidopsis thaliana (Mouse-ear cress).